The primary structure comprises 555 residues: MRDYEGNGVDIDNNGASPYSQHISRDHENERDSSRSRDKERDKGRDKDRDRDRNRDRDRDRDRVKERDKDRHRDRDGEKDRDRHHRDRHRDRSDRRERERTRDRDEDDLHRSRDYDRRRDNDKDREDRRRHRPSSRGRSEHRSKSRSRSPSKSKRISGFDMAPPTTALLPGATDAAGQVPGTNPAIPGLFSNMFPLASSQFGALPMMPVQAMTQQATRHARRVYVGGLPPTANEQSVATFFSHVMYAIGGNTAGPGDAVVNVYINHEKKFAFVEMRSVEEASNAMALDGVIFEGGPVKVRRPSDYNPSLAATLGPSQPSPNLNLAAVGSTPGSSGGLEGPDRIFVGGLPYYFTESQIRELLESFGQLRGFDLVKDRETGNSKGYAFCVYQDVSVTDIACAALNGIKMGDKTLTVRRANQGTTQPNPEQESVLLHAQQQIALQRFMLQPGALATKVLCLTEVVTVDELNDDDDYQDILEDMRTECEKFGALVNVVIPRPNPNGVPTPGLGKVFLEYADVDGSSKARQGLNGRKFGGNQVVAVFYPENKFSEGDYEA.

Residues 1-165 (MRDYEGNGVD…ISGFDMAPPT (165 aa)) are disordered. Basic and acidic residues-rich tracts occupy residues 23–81 (ISRD…EKDR) and 90–127 (RDRS…DRED). The segment covering 143–155 (SKSRSRSPSKSKR) has biased composition (basic residues). RRM domains follow at residues 221–304 (RRVY…RPSD), 341–419 (DRIF…RANQ), and 460–546 (EVVT…YPEN).

Belongs to the splicing factor SR family. As to expression, expressed in stems, leaves and apical buds.

It localises to the nucleus. Its function is as follows. Necessary for the splicing of pre-mRNA. Binds to the U -enriched regions of plant introns. The protein is Splicing factor U2af large subunit A (U2AF65A) of Nicotiana plumbaginifolia (Leadwort-leaved tobacco).